Here is a 337-residue protein sequence, read N- to C-terminus: Probable poly [ADP-ribose] polymerase DDB_G0278045 (337 aa).

Residues 21–231 (KKWDIIYKQR…NNNKNKNKNN (211 aa)) form the PARP catalytic domain. Positions 218–242 (NNTNNNNKNKNKNNNKNNNKNIKIQ) are enriched in low complexity. Positions 218–247 (NNTNNNNKNKNKNNNKNNNKNIKIQNENKN) are disordered.

The enzyme catalyses L-aspartyl-[protein] + NAD(+) = 4-O-(ADP-D-ribosyl)-L-aspartyl-[protein] + nicotinamide. The catalysed reaction is L-glutamyl-[protein] + NAD(+) = 5-O-(ADP-D-ribosyl)-L-glutamyl-[protein] + nicotinamide. It carries out the reaction NAD(+) + (ADP-D-ribosyl)n-acceptor = nicotinamide + (ADP-D-ribosyl)n+1-acceptor + H(+).. This chain is Probable poly [ADP-ribose] polymerase DDB_G0278045, found in Dictyostelium discoideum (Social amoeba).